The sequence spans 292 residues: Putative gonadotropin-releasing hormone II receptor (292 aa).

The Extracellular portion of the chain corresponds to 1 to 28; the sequence is MSAGNGTPWDATWNITVQWLAVDIACRT. C26 and C101 are oxidised to a cystine. The helical transmembrane segment at 29–49 threads the bilayer; it reads LMFLKLMATYSAAFLPVVIGL. Residues 50 to 67 are Cytoplasmic-facing; that stretch reads DRQAAVLNPLGSRSGVRK. A helical transmembrane segment spans residues 68–88; the sequence is LLGAAWGLSFLLAFPQLFLFH. Topologically, residues 89-115 are extracellular; sequence TVHCAGPVPFTQCVTKGSFKAQWQETT. Residues 116 to 136 traverse the membrane as a helical segment; it reads YNLFTFCCLFLLPLTAMAICY. Residues 137–177 lie on the Cytoplasmic side of the membrane; that stretch reads SRIVLSVSRPQTRKGSHAPAGEFALPRSFDNCPRVRLRALR. The chain crosses the membrane as a helical span at residues 178–198; the sequence is LALLILLTFILCWTPYYLLGM. Residues 199 to 216 are Extracellular-facing; sequence WYWFSPTMLTEVPPSLSH. The chain crosses the membrane as a helical span at residues 217–237; that stretch reads ILFLLGLLNAPLDPLLYGAFT. Residues 238 to 292 are Cytoplasmic-facing; that stretch reads LGCRRGHQELSIDSSKEGSGRMLQEEIHAFRQLEVQKTVTSRRAGETKGISITSI.

The protein belongs to the G-protein coupled receptor 1 family. Post-translationally, phosphorylated on the C-terminal cytoplasmic tail. As to expression, expressed in many tissues.

The protein resides in the cell membrane. Putative receptor for gonadotropin releasing hormone II (GnRH II) which is most probably non-functional. This Homo sapiens (Human) protein is Putative gonadotropin-releasing hormone II receptor (GNRHR2).